The sequence spans 426 residues: Glutamate-1-semialdehyde 2,1-aminomutase (426 aa).

Residue lysine 263 is modified to N6-(pyridoxal phosphate)lysine.

Belongs to the class-III pyridoxal-phosphate-dependent aminotransferase family. HemL subfamily. As to quaternary structure, homodimer. Requires pyridoxal 5'-phosphate as cofactor.

It localises to the cytoplasm. The catalysed reaction is (S)-4-amino-5-oxopentanoate = 5-aminolevulinate. It functions in the pathway porphyrin-containing compound metabolism; protoporphyrin-IX biosynthesis; 5-aminolevulinate from L-glutamyl-tRNA(Glu): step 2/2. The polypeptide is Glutamate-1-semialdehyde 2,1-aminomutase (Caldicellulosiruptor bescii (strain ATCC BAA-1888 / DSM 6725 / KCTC 15123 / Z-1320) (Anaerocellum thermophilum)).